Consider the following 346-residue polypeptide: Holliday junction branch migration complex subunit RuvB (346 aa).

The tract at residues 1–182 is large ATPase domain (RuvB-L); the sequence is MTRVISGEPQ…FGIPIRLEFY (182 aa). Residues L21, R22, G63, K66, T67, T68, R172, Y182, and R219 each contribute to the ATP site. T67 contributes to the Mg(2+) binding site. Residues 183–253 are small ATPAse domain (RuvB-S); that stretch reads TPAELRHVLQ…AAAMALARLE (71 aa). Residues 256–346 are head domain (RuvB-H); the sequence is ESGLDSLDRR…QAQGALFDEG (91 aa). R292, R311, and R316 together coordinate DNA.

This sequence belongs to the RuvB family. As to quaternary structure, homohexamer. Forms an RuvA(8)-RuvB(12)-Holliday junction (HJ) complex. HJ DNA is sandwiched between 2 RuvA tetramers; dsDNA enters through RuvA and exits via RuvB. An RuvB hexamer assembles on each DNA strand where it exits the tetramer. Each RuvB hexamer is contacted by two RuvA subunits (via domain III) on 2 adjacent RuvB subunits; this complex drives branch migration. In the full resolvosome a probable DNA-RuvA(4)-RuvB(12)-RuvC(2) complex forms which resolves the HJ.

The protein localises to the cytoplasm. The catalysed reaction is ATP + H2O = ADP + phosphate + H(+). In terms of biological role, the RuvA-RuvB-RuvC complex processes Holliday junction (HJ) DNA during genetic recombination and DNA repair, while the RuvA-RuvB complex plays an important role in the rescue of blocked DNA replication forks via replication fork reversal (RFR). RuvA specifically binds to HJ cruciform DNA, conferring on it an open structure. The RuvB hexamer acts as an ATP-dependent pump, pulling dsDNA into and through the RuvAB complex. RuvB forms 2 homohexamers on either side of HJ DNA bound by 1 or 2 RuvA tetramers; 4 subunits per hexamer contact DNA at a time. Coordinated motions by a converter formed by DNA-disengaged RuvB subunits stimulates ATP hydrolysis and nucleotide exchange. Immobilization of the converter enables RuvB to convert the ATP-contained energy into a lever motion, pulling 2 nucleotides of DNA out of the RuvA tetramer per ATP hydrolyzed, thus driving DNA branch migration. The RuvB motors rotate together with the DNA substrate, which together with the progressing nucleotide cycle form the mechanistic basis for DNA recombination by continuous HJ branch migration. Branch migration allows RuvC to scan DNA until it finds its consensus sequence, where it cleaves and resolves cruciform DNA. In Caulobacter vibrioides (strain ATCC 19089 / CIP 103742 / CB 15) (Caulobacter crescentus), this protein is Holliday junction branch migration complex subunit RuvB.